The primary structure comprises 367 residues: Pepsin A (367 aa).

Positions 1–42 (SIHRVPLKKGKSLRKQLKDHGLLEDFLKKHPYNPASKYHPVL) are cleaved as a propeptide — activation peptide. The region spanning 59-364 (YYGTISIGTP…DRANNKVGLS (306 aa)) is the Peptidase A1 domain. Asp-77 is a catalytic residue. The cysteines at positions 90 and 95 are disulfide-linked. Asn-113 carries an N-linked (GlcNAc...) asparagine glycan. The cysteines at positions 251 and 255 are disulfide-linked. Asp-260 is an active-site residue. Cys-290 and Cys-323 form a disulfide bridge.

It belongs to the peptidase A1 family.

It catalyses the reaction Preferential cleavage: hydrophobic, preferably aromatic, residues in P1 and P1' positions. Cleaves 1-Phe-|-Val-2, 4-Gln-|-His-5, 13-Glu-|-Ala-14, 14-Ala-|-Leu-15, 15-Leu-|-Tyr-16, 16-Tyr-|-Leu-17, 23-Gly-|-Phe-24, 24-Phe-|-Phe-25 and 25-Phe-|-Tyr-26 bonds in the B chain of insulin.. Functionally, shows particularly broad specificity; although bonds involving phenylalanine and leucine are preferred, many others are also cleaved to some extent. This chain is Pepsin A (PGA), found in Gallus gallus (Chicken).